The chain runs to 438 residues: MGNTNGDSAFNKRTIAAALANYIDAGSIVAGSAGLSLWVSYLKLSDTQIGLLGALSANAISAAVGALLGGFLADKVGRKAVYTNSMLVYALGICLVLFGVNFPMLLSGYIIIGLSVGADITASWTIIAENAPKKNRARHCGVAQVAWAAGAVVVLLLSVLAGDLGLLGNKIVFAHLLVIALITYILRIRLPESDAWQTKNQPEEAQAEKPAVLNKTSYFDLLKPMYLKSILFLMGVYLVWNLAAGVMGFFMPYIYQQVGGVSANMANLLQMGLFIFTGLGVALIFMPFADKYRKTVFGIAAFMAVIGWTLFLLPVEGLPILLLFIVVIGINNGAGQQANYQLWASEIFPTQYRASAQGLMFFLVRISIGIWSLFVPMIITNFGIGTMAAILLGCVTASMIIGLLFAPNTSGKSLEQIQEELYGSPQSQVKKGTESKIM.

A run of 12 helical transmembrane segments spans residues I15–L35, I49–G69, M86–L106, G108–A128, W147–L167, I171–P191, I230–F250, L268–F288, T295–L312, G317–A334, L359–I379, and M387–P407.

The protein belongs to the major facilitator superfamily. Sugar transporter (TC 2.A.1.1) family.

It localises to the cell membrane. Its pathway is polyol metabolism; myo-inositol degradation into acetyl-CoA. Functionally, minor myo-inositol uptake transporter. The sequence is that of Minor myo-inositol transporter IolF (iolF) from Bacillus subtilis (strain 168).